The chain runs to 119 residues: Large ribosomal subunit protein uL14 (119 aa).

Belongs to the universal ribosomal protein uL14 family. As to quaternary structure, part of the 50S ribosomal subunit. Forms a cluster with proteins L3 and L19. In the 70S ribosome, L14 and L19 interact and together make contacts with the 16S rRNA in bridges B5 and B8.

Functionally, binds to 23S rRNA. Forms part of two intersubunit bridges in the 70S ribosome. The sequence is that of Large ribosomal subunit protein uL14 from Wolbachia pipientis subsp. Culex pipiens (strain wPip).